The following is a 324-amino-acid chain: Probable carboxylesterase 9 (324 aa).

An Involved in the stabilization of the negatively charged intermediate by the formation of the oxyanion hole motif is present at residues 86–88 (HGS). Residues serine 171, aspartate 272, and histidine 302 contribute to the active site.

It belongs to the 'GDXG' lipolytic enzyme family. Expressed in flowers.

It carries out the reaction a carboxylic ester + H2O = an alcohol + a carboxylate + H(+). In terms of biological role, carboxylesterase acting on esters with varying acyl chain length. This Arabidopsis thaliana (Mouse-ear cress) protein is Probable carboxylesterase 9 (CXE9).